Consider the following 249-residue polypeptide: Probable transcriptional regulatory protein OTT_1378 (249 aa).

This sequence belongs to the TACO1 family.

Its subcellular location is the cytoplasm. This is Probable transcriptional regulatory protein OTT_1378 from Orientia tsutsugamushi (strain Ikeda) (Rickettsia tsutsugamushi).